A 64-amino-acid polypeptide reads, in one-letter code: Large ribosomal subunit protein bL33 (64 aa).

Basic and acidic residues-rich tracts occupy residues 16–25 (EARTSSDPKR) and 33–42 (TTEKNRRNTT). Residues 16–42 (EARTSSDPKRSNGVSRYTTEKNRRNTT) form a disordered region.

This sequence belongs to the bacterial ribosomal protein bL33 family.

The sequence is that of Large ribosomal subunit protein bL33 from Prochlorococcus marinus (strain MIT 9301).